A 31-amino-acid polypeptide reads, in one-letter code: Cytochrome b6-f complex subunit 6 (31 aa).

The helical transmembrane segment at 4-26 (LTSYFGFLLAALTITSALFIGLN) threads the bilayer.

This sequence belongs to the PetL family. As to quaternary structure, the 4 large subunits of the cytochrome b6-f complex are cytochrome b6, subunit IV (17 kDa polypeptide, PetD), cytochrome f and the Rieske protein, while the 4 small subunits are PetG, PetL, PetM and PetN. The complex functions as a dimer.

It is found in the plastid. The protein resides in the chloroplast thylakoid membrane. Its function is as follows. Component of the cytochrome b6-f complex, which mediates electron transfer between photosystem II (PSII) and photosystem I (PSI), cyclic electron flow around PSI, and state transitions. PetL is important for photoautotrophic growth as well as for electron transfer efficiency and stability of the cytochrome b6-f complex. The sequence is that of Cytochrome b6-f complex subunit 6 from Amaranthus caudatus (Love-lies-bleeding).